The following is a 781-amino-acid chain: Translation initiation factor IF-2 (781 aa).

The interval 44–195 is disordered; sequence RQLDNAVDGT…TPPKPKELPE (152 aa). The span at 53-65 shows a compositional bias: basic and acidic residues; the sequence is TNKKAEAPKKETT. Over residues 66-81 the composition is skewed to polar residues; that stretch reads SNENGNSKGPNKPNMT. Residues 82–93 show a composition bias toward low complexity; it reads NSNEKSNKPNKP. Positions 115–126 are enriched in polar residues; it reads KPANTGNQTQAS. The span at 127-169 shows a compositional bias: low complexity; the sequence is GNQQAGGQKRNNNNNSNRPGGGNPNRPGGNNRPNRGGNFNNKG. The tr-type G domain maps to 282 to 451; sequence ERPPVVTIMG…LLVSEVEELK (170 aa). The G1 stretch occupies residues 291–298; sequence GHVDHGKT. A GTP-binding site is contributed by 291–298; it reads GHVDHGKT. A G2 region spans residues 316 to 320; it reads GITQH. Residues 337 to 340 form a G3 region; sequence DTPG. GTP-binding positions include 337 to 341 and 391 to 394; these read DTPGH and NKID. Positions 391–394 are G4; sequence NKID. Positions 427 to 429 are G5; that stretch reads SAK.

The protein belongs to the TRAFAC class translation factor GTPase superfamily. Classic translation factor GTPase family. IF-2 subfamily.

Its subcellular location is the cytoplasm. Functionally, one of the essential components for the initiation of protein synthesis. Protects formylmethionyl-tRNA from spontaneous hydrolysis and promotes its binding to the 30S ribosomal subunits. Also involved in the hydrolysis of GTP during the formation of the 70S ribosomal complex. The sequence is that of Translation initiation factor IF-2 from Listeria monocytogenes serotype 4a (strain HCC23).